The primary structure comprises 159 residues: uncharacterized protein (159 aa).

3 helical membrane passes run Ile-16 to Phe-36, Val-84 to Ile-104, and Val-112 to Val-132.

It is found in the cell membrane. This is an uncharacterized protein from Bacillus subtilis (strain 168).